The primary structure comprises 533 residues: MNRRRTMLLLICLCATFCLMTQLGAANVVLMGTNLTLSFDDVEASFAPGVKGSGFEGVVYTAEPLDACSPLTSKAEKGPPSPFALIIRGGCTFDEKVKNAQDAGFKAAIVYDNENSGVLISMAGSSGGIHIYAVFISKASGEVLKKFSGHTDVEVWILPAFENSAWSIMAISFISLLAMSAVLATCFFVRRHHIRRDRPRIPEAREFHGMSSQLVKAMPSLIFTKVQEDNCTSSMCAICLEDYNVGEKLRVLPCRHKFHAACVDLWLTTWRTFCPVCKRDASTGIPDPPASETTPLLSSAVRLPSQSSSFRSSVAASPPRPISRRPSSQSISRIYAASGTPNSPNPIRSFTNSTAMSISRSNVDLSNMSSRPRASHLASAHSLVGSHLSPPINIRYASPHMSHSGYASPSPHVSSSYVSNSGYGSSSYYLGSSSQHRSYLRRCGESGPSLSTMAPQSPQQSQLRHGGESDLNLAGASSGQSFRQSYLRHCADSEVNLAGASSGQSFRQSYLRHCADSDASLSAMASAQSLPGC.

A signal peptide spans 1–26 (MNRRRTMLLLICLCATFCLMTQLGAA). The Lumenal portion of the chain corresponds to 27–167 (NVVLMGTNLT…LPAFENSAWS (141 aa)). N-linked (GlcNAc...) asparagine glycosylation is present at N34. C68 and C91 form a disulfide bridge. In terms of domain architecture, PA spans 84–145 (ALIIRGGCTF…ISKASGEVLK (62 aa)). A helical transmembrane segment spans residues 168–188 (IMAISFISLLAMSAVLATCFF). Topologically, residues 189-533 (VRRHHIRRDR…MASAQSLPGC (345 aa)) are cytoplasmic. The segment at 236-278 (CAICLEDYNVGEKLRVLPCRHKFHAACVDLWLTTWRTFCPVCK) adopts an RING-type; atypical zinc-finger fold. Disordered regions lie at residues 309-329 (SFRS…PSSQ) and 440-476 (LRRC…LAGA). The span at 448-463 (PSLSTMAPQSPQQSQL) shows a compositional bias: polar residues.

The protein resides in the prevacuolar compartment membrane. It localises to the protein storage vacuole membrane. It is found in the golgi apparatus membrane. Its function is as follows. Involved in the trafficking of vacuolar proteins. Functions probably as a sorting receptor for protein trafficking to the protein storage vacuole (PSV) by binding the C-terminal vacuolar sorting determinant (VSD) of vacuolar-sorted proteins. In Oryza sativa subsp. japonica (Rice), this protein is Receptor homology region, transmembrane domain- and RING domain-containing protein 1.